We begin with the raw amino-acid sequence, 157 residues long: MRIGIGIDVHPFAEGRKLVIGGVHIPGHNGLDGHSDADVLLHAVSDALLGAAALGDIGLHFPNTSQEFKDIDSMILLKQVRKLLEKHGYQTVNIDAMLLLEEPKIAPYITGMRKNIARCLDIEIGMVSVKATTNEKLGYIGREEGAAAHAVCIIRSL.

A divalent metal cation is bound by residues D8 and H10. 4-CDP-2-C-methyl-D-erythritol 2-phosphate is bound by residues 8–10 (DVH) and 34–35 (HS). H42 serves as a coordination point for a divalent metal cation. 4-CDP-2-C-methyl-D-erythritol 2-phosphate is bound by residues 56-58 (DIG), 132-135 (TTNE), and R142.

This sequence belongs to the IspF family. As to quaternary structure, homotrimer. The cofactor is a divalent metal cation.

It catalyses the reaction 4-CDP-2-C-methyl-D-erythritol 2-phosphate = 2-C-methyl-D-erythritol 2,4-cyclic diphosphate + CMP. The protein operates within isoprenoid biosynthesis; isopentenyl diphosphate biosynthesis via DXP pathway; isopentenyl diphosphate from 1-deoxy-D-xylulose 5-phosphate: step 4/6. Functionally, involved in the biosynthesis of isopentenyl diphosphate (IPP) and dimethylallyl diphosphate (DMAPP), two major building blocks of isoprenoid compounds. Catalyzes the conversion of 4-diphosphocytidyl-2-C-methyl-D-erythritol 2-phosphate (CDP-ME2P) to 2-C-methyl-D-erythritol 2,4-cyclodiphosphate (ME-CPP) with a corresponding release of cytidine 5-monophosphate (CMP). The protein is 2-C-methyl-D-erythritol 2,4-cyclodiphosphate synthase of Pelodictyon phaeoclathratiforme (strain DSM 5477 / BU-1).